Reading from the N-terminus, the 83-residue chain is Small ribosomal subunit protein eS27 (83 aa).

Residues 37 to 59 (CSGCFKISTVFSHATTVVVCVGC) form a C4-type zinc finger.

The protein belongs to the eukaryotic ribosomal protein eS27 family. Requires Zn(2+) as cofactor.

The sequence is that of Small ribosomal subunit protein eS27 (rps-27) from Caenorhabditis elegans.